A 470-amino-acid chain; its full sequence is Glutamate--tRNA ligase (470 aa).

The short motif at 9–19 (PSPTGFLHVGG) is the 'HIGH' region element. Residues 236-240 (KLSKR) carry the 'KMSKS' region motif. Lys239 lines the ATP pocket.

Belongs to the class-I aminoacyl-tRNA synthetase family. Glutamate--tRNA ligase type 1 subfamily. As to quaternary structure, monomer.

It is found in the cytoplasm. It carries out the reaction tRNA(Glu) + L-glutamate + ATP = L-glutamyl-tRNA(Glu) + AMP + diphosphate. Functionally, catalyzes the attachment of glutamate to tRNA(Glu) in a two-step reaction: glutamate is first activated by ATP to form Glu-AMP and then transferred to the acceptor end of tRNA(Glu). This Psychromonas ingrahamii (strain DSM 17664 / CCUG 51855 / 37) protein is Glutamate--tRNA ligase.